The following is a 388-amino-acid chain: G2/mitotic-specific cyclin-B (388 aa).

It belongs to the cyclin family. Cyclin AB subfamily. In terms of assembly, interacts with the CDK1 protein kinase to form a serine/threonine kinase holoenzyme complex also known as maturation promoting factor (MPF). The cyclin subunit imparts substrate specificity to the complex.

In terms of biological role, essential for the control of the cell cycle at the G2/M (mitosis) transition. This is G2/mitotic-specific cyclin-B from Marthasterias glacialis (Spiny starfish).